Reading from the N-terminus, the 322-residue chain is Elongation factor Ts, mitochondrial (322 aa).

Belongs to the EF-Ts family.

Its subcellular location is the mitochondrion. Functionally, associates with the EF-Tu.GDP complex and induces the exchange of GDP to GTP. It remains bound to the aminoacyl-tRNA.EF-Tu.GTP complex up to the GTP hydrolysis stage on the ribosome. The sequence is that of Elongation factor Ts, mitochondrial from Chlamydomonas reinhardtii (Chlamydomonas smithii).